Consider the following 79-residue polypeptide: Translational regulator CsrA (79 aa).

The protein belongs to the CsrA/RsmA family. Homodimer; the beta-strands of each monomer intercalate to form a hydrophobic core, while the alpha-helices form wings that extend away from the core.

The protein resides in the cytoplasm. In terms of biological role, a translational regulator that binds mRNA to regulate translation initiation and/or mRNA stability. Usually binds in the 5'-UTR at or near the Shine-Dalgarno sequence preventing ribosome-binding, thus repressing translation. Its main target seems to be the major flagellin gene, while its function is anatagonized by FliW. In Geobacter sulfurreducens (strain ATCC 51573 / DSM 12127 / PCA), this protein is Translational regulator CsrA.